The sequence spans 863 residues: DNA mismatch repair protein MutS (863 aa).

Residue 615-622 (GPNMAGKS) coordinates ATP.

It belongs to the DNA mismatch repair MutS family.

Its function is as follows. This protein is involved in the repair of mismatches in DNA. It is possible that it carries out the mismatch recognition step. This protein has a weak ATPase activity. The sequence is that of DNA mismatch repair protein MutS from Pelotomaculum thermopropionicum (strain DSM 13744 / JCM 10971 / SI).